The sequence spans 770 residues: Integrin beta-2 (770 aa).

The first 22 residues, 1–22, serve as a signal peptide directing secretion; the sequence is MLPQRPQLLLLAGLLSLQSVLS. The residue at position 23 (glutamine 23) is a Pyrrolidone carboxylic acid. Over 23–701 the chain is Extracellular; the sequence is QECTKYKVST…DMLECVKGPN (679 aa). In terms of domain architecture, PSI spans 24–74; it reads ECTKYKVSTCRDCIESGPSCAWCQKLNFTGQGEPDSTRCDTRAQLLSKGCP. Cystine bridges form between cysteine 25/cysteine 43, cysteine 33/cysteine 447, cysteine 36/cysteine 62, cysteine 46/cysteine 73, cysteine 191/cysteine 198, cysteine 246/cysteine 286, cysteine 386/cysteine 400, cysteine 420/cysteine 445, cysteine 449/cysteine 467, cysteine 459/cysteine 470, cysteine 472/cysteine 481, cysteine 483/cysteine 514, cysteine 497/cysteine 512, cysteine 506/cysteine 517, cysteine 519/cysteine 534, cysteine 536/cysteine 559, cysteine 541/cysteine 557, cysteine 549/cysteine 562, cysteine 564/cysteine 573, cysteine 575/cysteine 598, cysteine 582/cysteine 596, cysteine 590/cysteine 601, cysteine 603/cysteine 612, cysteine 615/cysteine 618, cysteine 622/cysteine 663, cysteine 628/cysteine 647, cysteine 631/cysteine 643, and cysteine 671/cysteine 696. 2 N-linked (GlcNAc...) asparagine glycosylation sites follow: asparagine 50 and asparagine 116. Positions 124–363 constitute a VWFA domain; that stretch reads GYPIDLYYLM…ELIKSAYNKL (240 aa). The Mg(2+) site is built by serine 136 and serine 138. Ca(2+) is bound by residues serine 138, aspartate 141, aspartate 142, and aspartate 173. The Ca(2+) site is built by asparagine 229, aspartate 231, proline 233, and glutamate 234. Glutamate 234 is a Mg(2+) binding site. A glycan (N-linked (GlcNAc...) asparagine) is linked at asparagine 254. 2 residues coordinate Ca(2+): aspartate 264 and glutamate 347. Residues 397 to 399 carry the Cell attachment site motif; sequence RGD. I-EGF domains lie at 449–482, 483–535, 536–574, and 575–613; these read CREA…KNCE, CQTH…QFCE, CDNV…SACQ, and CLKS…PLCI. A glycan (N-linked (GlcNAc...) asparagine) is linked at asparagine 501. Asparagine 642 is a glycosylation site (N-linked (GlcNAc...) asparagine). A helical membrane pass occupies residues 702–724; that stretch reads IAAIVGGTVGGVVLVGILLLAIW. At 725 to 770 the chain is on the cytoplasmic side; that stretch reads KALTHLSDLREYHRFEKEKLKSQWNNDNPLFKSATTTVMNPKFAES. Residues serine 746 and serine 757 each carry the phosphoserine modification. 2 positions are modified to phosphothreonine: threonine 759 and threonine 761.

The protein belongs to the integrin beta chain family. Heterodimer of an alpha and a beta subunit. The ITGB2 beta subunit associates with the ITGAL, ITGAM, ITGAX or ITGAD alpha subunits. Found in a complex with CD177 and ITGAM/CD11b. Interacts with FGR. Interacts with COPS5 and RANBP9. Interacts with FLNA (via filamin repeats 4, 9, 12, 17, 19, 21, and 23). Interacts with THBD. Post-translationally, both Ser-746 and Ser-757 become phosphorylated when T-cells are exposed to phorbol esters. Phosphorylation on Thr-759 (but not on Ser-757) allows interaction with 14-3-3 proteins.

The protein localises to the cell membrane. Its subcellular location is the membrane raft. In terms of biological role, integrin ITGAL/ITGB2 is a receptor for ICAM1, ICAM2, ICAM3 and ICAM4. Integrin ITGAL/ITGB2 is also a receptor for the secreted form of ubiquitin-like protein ISG15; the interaction is mediated by ITGAL. Integrins ITGAM/ITGB2 and ITGAX/ITGB2 are receptors for the iC3b fragment of the third complement component and for fibrinogen. Integrin ITGAX/ITGB2 recognizes the sequence G-P-R in fibrinogen alpha-chain. Integrin ITGAM/ITGB2 recognizes P1 and P2 peptides of fibrinogen gamma chain. Integrin ITGAM/ITGB2 is also a receptor for factor X. Integrin ITGAD/ITGB2 is a receptor for ICAM3 and VCAM1. Contributes to natural killer cell cytotoxicity. Involved in leukocyte adhesion and transmigration of leukocytes including T-cells and neutrophils. Triggers neutrophil transmigration during lung injury through PTK2B/PYK2-mediated activation. Integrin ITGAL/ITGB2 in association with ICAM3, contributes to apoptotic neutrophil phagocytosis by macrophages. In association with alpha subunit ITGAM/CD11b, required for CD177-PRTN3-mediated activation of TNF primed neutrophils. This chain is Integrin beta-2 (ITGB2), found in Ovis canadensis (Bighorn sheep).